The chain runs to 86 residues: Putative defensin-like protein 234 (86 aa).

An N-terminal signal peptide occupies residues 1-26; that stretch reads MRSATLLLVSCVLLSFILGNVKEVEA. Intrachain disulfides connect cysteine 34/cysteine 86, cysteine 44/cysteine 71, cysteine 52/cysteine 80, and cysteine 69/cysteine 82.

It belongs to the DEFL family.

It is found in the secreted. This Arabidopsis thaliana (Mouse-ear cress) protein is Putative defensin-like protein 234 (SCRL14).